The chain runs to 294 residues: 1D-myo-inositol 2-acetamido-2-deoxy-alpha-D-glucopyranoside deacetylase (294 aa).

3 residues coordinate Zn(2+): His14, Asp17, and His149.

It belongs to the MshB deacetylase family. Zn(2+) serves as cofactor.

The enzyme catalyses 1D-myo-inositol 2-acetamido-2-deoxy-alpha-D-glucopyranoside + H2O = 1D-myo-inositol 2-amino-2-deoxy-alpha-D-glucopyranoside + acetate. Functionally, catalyzes the deacetylation of 1D-myo-inositol 2-acetamido-2-deoxy-alpha-D-glucopyranoside (GlcNAc-Ins) in the mycothiol biosynthesis pathway. This Rhodococcus erythropolis (strain PR4 / NBRC 100887) protein is 1D-myo-inositol 2-acetamido-2-deoxy-alpha-D-glucopyranoside deacetylase.